The primary structure comprises 248 residues: 3-deoxy-manno-octulosonate cytidylyltransferase (248 aa).

It belongs to the KdsB family.

It is found in the cytoplasm. It carries out the reaction 3-deoxy-alpha-D-manno-oct-2-ulosonate + CTP = CMP-3-deoxy-beta-D-manno-octulosonate + diphosphate. The protein operates within nucleotide-sugar biosynthesis; CMP-3-deoxy-D-manno-octulosonate biosynthesis; CMP-3-deoxy-D-manno-octulosonate from 3-deoxy-D-manno-octulosonate and CTP: step 1/1. Its pathway is bacterial outer membrane biogenesis; lipopolysaccharide biosynthesis. Its function is as follows. Activates KDO (a required 8-carbon sugar) for incorporation into bacterial lipopolysaccharide in Gram-negative bacteria. This chain is 3-deoxy-manno-octulosonate cytidylyltransferase, found in Chlorobium phaeobacteroides (strain BS1).